Here is a 687-residue protein sequence, read N- to C-terminus: Variant-specific surface protein VSP4A1 (687 aa).

Positions M1–A14 are cleaved as a signal peptide. Topologically, residues A15–G660 are extracellular. The helical transmembrane segment at I661–I681 threads the bilayer. Over C682–Q687 the chain is Cytoplasmic.

Belongs to the Giardia variant surface protein family. O-glycosylated. The major glycan is a trisaccharide with Glc at the reducing terminus. In terms of processing, palmitoylated.

The protein resides in the cell membrane. The protein is Variant-specific surface protein VSP4A1 of Giardia intestinalis (Giardia lamblia).